Consider the following 416-residue polypeptide: Argininosuccinate synthase (416 aa).

ATP-binding positions include 11–19 (AYSGGLDTS) and alanine 37. Residue tyrosine 88 participates in L-citrulline binding. 2 positions are modified to phosphotyrosine: tyrosine 88 and tyrosine 114. 116–124 (AHGATGKGN) provides a ligand contact to ATP. The L-aspartate site is built by threonine 120, asparagine 124, and aspartate 125. Position 124 (asparagine 124) interacts with L-citrulline. L-citrulline-binding residues include arginine 128, serine 181, serine 190, glutamate 271, and tyrosine 283. A Phosphoserine modification is found at serine 181.

It belongs to the argininosuccinate synthase family. As to quaternary structure, homotetramer.

It localises to the cytoplasm. Its subcellular location is the cytosol. It carries out the reaction L-citrulline + L-aspartate + ATP = 2-(N(omega)-L-arginino)succinate + AMP + diphosphate + H(+). Its pathway is amino-acid biosynthesis; L-arginine biosynthesis; L-arginine from L-ornithine and carbamoyl phosphate: step 2/3. It functions in the pathway nitrogen metabolism; urea cycle; (N(omega)-L-arginino)succinate from L-aspartate and L-citrulline: step 1/1. Its function is as follows. One of the enzymes of the urea cycle, the metabolic pathway transforming neurotoxic amonia produced by protein catabolism into inocuous urea in the liver of ureotelic animals. Catalyzes the formation of arginosuccinate from aspartate, citrulline and ATP and together with ASL it is responsible for the biosynthesis of arginine in most body tissues. The chain is Argininosuccinate synthase from Gallus gallus (Chicken).